A 508-amino-acid polypeptide reads, in one-letter code: UDP-N-acetylmuramyl-tripeptide synthetase (508 aa).

Ser35 contributes to the UDP-N-acetyl-alpha-D-muramoyl-L-alanyl-D-glutamate binding site. An ATP-binding site is contributed by 118-124 (GTDGKSS). UDP-N-acetyl-alpha-D-muramoyl-L-alanyl-D-glutamate contacts are provided by residues 163–164 (ST), Thr190, and Arg200. Lys232 carries the post-translational modification N6-carboxylysine.

It belongs to the MurCDEF family. MurE subfamily. In terms of processing, carboxylation is probably crucial for Mg(2+) binding and, consequently, for the gamma-phosphate positioning of ATP.

The protein resides in the cytoplasm. It participates in cell wall biogenesis; peptidoglycan biosynthesis. Functionally, catalyzes the addition of an amino acid to the nucleotide precursor UDP-N-acetylmuramoyl-L-alanyl-D-glutamate (UMAG) in the biosynthesis of bacterial cell-wall peptidoglycan. This Borrelia garinii subsp. bavariensis (strain ATCC BAA-2496 / DSM 23469 / PBi) (Borreliella bavariensis) protein is UDP-N-acetylmuramyl-tripeptide synthetase.